Reading from the N-terminus, the 192-residue chain is Elongation factor P (192 aa).

This sequence belongs to the elongation factor P family.

It localises to the cytoplasm. It participates in protein biosynthesis; polypeptide chain elongation. In terms of biological role, involved in peptide bond synthesis. Stimulates efficient translation and peptide-bond synthesis on native or reconstituted 70S ribosomes in vitro. Probably functions indirectly by altering the affinity of the ribosome for aminoacyl-tRNA, thus increasing their reactivity as acceptors for peptidyl transferase. The protein is Elongation factor P (efp) of Aquifex aeolicus (strain VF5).